We begin with the raw amino-acid sequence, 282 residues long: Biotin synthase (282 aa).

One can recognise a Radical SAM core domain in the interval 1 to 228 (MQEIFLCSIS…NARLMVAGGR (228 aa)). [4Fe-4S] cluster is bound by residues Cys-17, Cys-21, and Cys-24. The [2Fe-2S] cluster site is built by Cys-61, Cys-96, Cys-154, and Arg-221.

This sequence belongs to the radical SAM superfamily. Biotin synthase family. Homodimer. The cofactor is [4Fe-4S] cluster. [2Fe-2S] cluster serves as cofactor.

It catalyses the reaction (4R,5S)-dethiobiotin + (sulfur carrier)-SH + 2 reduced [2Fe-2S]-[ferredoxin] + 2 S-adenosyl-L-methionine = (sulfur carrier)-H + biotin + 2 5'-deoxyadenosine + 2 L-methionine + 2 oxidized [2Fe-2S]-[ferredoxin]. The protein operates within cofactor biosynthesis; biotin biosynthesis; biotin from 7,8-diaminononanoate: step 2/2. Functionally, catalyzes the conversion of dethiobiotin (DTB) to biotin by the insertion of a sulfur atom into dethiobiotin via a radical-based mechanism. In Helicobacter pylori (strain J99 / ATCC 700824) (Campylobacter pylori J99), this protein is Biotin synthase.